The sequence spans 273 residues: WIMGHMVNAIAQIDEFVNLGANSIETDVSFDSSANPEYTYHGIPCDCGRTCTKWEHFNEFLKGLRKATTPGDSKYHEKLVLVVFDLKTGSLYDNQASDAGKKLAKSLLQNYWNNGNNGGGAYIVLSIPNLAHYKLITGFKEALTSEGHPELMDKVGYDFSGNDDIGDVANAYKKAGVTGHVWQSDGITNCLLRGLDRVRKAVANRDSSNGYINKVYYWTVDKRQSTRDALDAGVDGIMTNYPDVIADVLNESAYKAKFRIASYDDNPWETFKN.

Residue His-5 is part of the active site. 2 residues coordinate Mg(2+): Glu-25 and Asp-27. The Nucleophile role is filled by His-41. Cystine bridges form between Cys-45-Cys-51 and Cys-47-Cys-190. Asp-85 contacts Mg(2+). The N-linked (GlcNAc...) asparagine glycan is linked to Asn-250.

Belongs to the arthropod phospholipase D family. Class II subfamily. Mg(2+) serves as cofactor. In terms of tissue distribution, expressed by the venom gland.

It localises to the secreted. The catalysed reaction is an N-(acyl)-sphingosylphosphocholine = an N-(acyl)-sphingosyl-1,3-cyclic phosphate + choline. It catalyses the reaction an N-(acyl)-sphingosylphosphoethanolamine = an N-(acyl)-sphingosyl-1,3-cyclic phosphate + ethanolamine. The enzyme catalyses a 1-acyl-sn-glycero-3-phosphocholine = a 1-acyl-sn-glycero-2,3-cyclic phosphate + choline. It carries out the reaction a 1-acyl-sn-glycero-3-phosphoethanolamine = a 1-acyl-sn-glycero-2,3-cyclic phosphate + ethanolamine. Its function is as follows. Dermonecrotic toxins cleave the phosphodiester linkage between the phosphate and headgroup of certain phospholipids (sphingolipid and lysolipid substrates), forming an alcohol (often choline) and a cyclic phosphate. This toxin acts on sphingomyelin (SM). It may also act on ceramide phosphoethanolamine (CPE), lysophosphatidylcholine (LPC) and lysophosphatidylethanolamine (LPE), but not on lysophosphatidylserine (LPS), and lysophosphatidylglycerol (LPG). It acts by transphosphatidylation, releasing exclusively cyclic phosphate products as second products. Induces dermonecrosis, hemolysis, increased vascular permeability, edema, inflammatory response, and platelet aggregation. This Loxosceles apachea (Apache recluse spider) protein is Dermonecrotic toxin LapSicTox-alphaIB1b3.